A 471-amino-acid polypeptide reads, in one-letter code: Methyltransferase OMS1, mitochondrial (471 aa).

A mitochondrion-targeting transit peptide spans methionine 1 to tyrosine 39. Over asparagine 40–lysine 103 the chain is Mitochondrial matrix. The helical transmembrane segment at glycine 104–phenylalanine 123 threads the bilayer. Residues threonine 124–serine 471 lie on the Mitochondrial intermembrane side of the membrane. Basic and acidic residues predominate over residues phenylalanine 450–glutamate 463. The segment at phenylalanine 450–serine 471 is disordered.

Belongs to the methyltransferase superfamily. METL family.

It is found in the mitochondrion inner membrane. Functionally, mitochondrial methyltransferase which suppresses respiratory defects caused by OXA1 mutations when overexpressed. In Saccharomyces cerevisiae (strain ATCC 204508 / S288c) (Baker's yeast), this protein is Methyltransferase OMS1, mitochondrial (OMS1).